A 134-amino-acid polypeptide reads, in one-letter code: RxLR effector protein Avh238 (134 aa).

Positions 1–21 are cleaved as a signal peptide; the sequence is MRGVFFVAVAVAIFARSSAEA. The short motif at 44-68 is the RxLR-dEER element; the sequence is RFLRVADPEDDDLAAPADDGKTEER. A disordered region spans residues 49 to 70; the sequence is ADPEDDDLAAPADDGKTEERAP. The span at 61 to 70 shows a compositional bias: basic and acidic residues; sequence DDGKTEERAP.

It belongs to the RxLR effector family. In terms of assembly, interacts with host 1-aminocyclopropane-1-carboxylate synthases ACS1, ACS2, ACS3, ACS10 and ACS12.

The protein resides in the secreted. Its subcellular location is the host cytoplasm. It localises to the host nucleus. Its function is as follows. Effector that suppresses plant defense responses during the early stages of pathogen infection. Suppresses cell death induced by effectors and PAMPs in plant hosts. Is able to induced cell death in tomato, tobacco, eggplant, and potato, but not in A.thaliana. Interacts with and destabilizes host 1-aminocyclopropane-1-carboxylate synthases. By suppressing type2 ACS-catalyzed ethylene biosynthesis, Avh238 facilitates Phytophthora infection. The protein is RxLR effector protein Avh238 (Avh238) of Phytophthora sojae (strain P6497) (Soybean stem and root rot agent).